We begin with the raw amino-acid sequence, 469 residues long: Putative dipeptidase SAUSA300_1697 (469 aa).

Histidine 84 is a binding site for Zn(2+). Residue aspartate 86 is part of the active site. Aspartate 115 is a Zn(2+) binding site. Glutamate 149 (proton acceptor) is an active-site residue. The Zn(2+) site is built by glutamate 150, aspartate 173, and histidine 440.

The protein belongs to the peptidase M20A family. The cofactor is Zn(2+).

This Staphylococcus aureus (strain USA300) protein is Putative dipeptidase SAUSA300_1697.